A 408-amino-acid polypeptide reads, in one-letter code: MPSQKIISALAEIESSASPQNKLQLYNDLLSETVSASPEPQLADDLIYYLDSVLSEDLSIVAARPILDSFIYTLRKLSSETQIKVAQHAVNLLQSRSASVEEQDAQIREILADAYEAEEEYIAAARALQGIHIDSSQRLVSDSAKVKLWIRIVRLYLEEDDTTSAEAFLNRIKNLPSKIEDHELKLHFRLSQARIQDARRRFLDASQEYFAVSLAAGVDESDRLQALAAAIRCAVLAPAGPQRSRTLATLYKDDRATSVEEFGILEKMFLDRLLTPEEVSAFAQRLAPHQLAQTADGTTVLDKAVVEHNLVAASKLYENIKTDALGAILGLQASGDLTAGEKAEAYAARMVEQGRLSGSIDQIDGIIYFESNTTATGRHIRQWDAGVQGLSEGVERVATNIAEGHLVR.

The PCI domain occupies 194–374 (RIQDARRRFL…GIIYFESNTT (181 aa)).

This sequence belongs to the CSN4 family. As to quaternary structure, component of the COP9 signalosome (CSN) complex.

The protein localises to the cytoplasm. It is found in the nucleus. Functionally, component of the COP9 signalosome (CSN) complex that acts as an regulator of the ubiquitin (Ubl) conjugation pathway by mediating the deneddylation of the cullin subunit of SCF-type E3 ubiquitin-protein ligase complexes. The CSN complex seems to link protein degradation to sexual development. Required for fruit body formation. In Emericella nidulans (strain FGSC A4 / ATCC 38163 / CBS 112.46 / NRRL 194 / M139) (Aspergillus nidulans), this protein is COP9 signalosome complex subunit 4 (csnD).